A 207-amino-acid polypeptide reads, in one-letter code: Phosphoenolpyruvate guanylyltransferase (207 aa).

The phosphoenolpyruvate site is built by Thr-137, Gly-153, and Ser-156.

The protein belongs to the CofC family.

The enzyme catalyses phosphoenolpyruvate + GTP + H(+) = enolpyruvoyl-2-diphospho-5'-guanosine + diphosphate. It participates in cofactor biosynthesis; coenzyme F420 biosynthesis. Guanylyltransferase that catalyzes the activation of phosphoenolpyruvate (PEP) as enolpyruvoyl-2-diphospho-5'-guanosine, via the condensation of PEP with GTP. It is involved in the biosynthesis of coenzyme F420, a hydride carrier cofactor. The chain is Phosphoenolpyruvate guanylyltransferase from Sphaerobacter thermophilus (strain ATCC 49802 / DSM 20745 / KCCM 41009 / NCIMB 13125 / S 6022).